Consider the following 386-residue polypeptide: Methionine aminopeptidase 1 (386 aa).

At Ala-2 the chain carries N-acetylalanine. The segment at 6–59 (TRVCETDGCSSEAKLQCPTCIKLGIQGSYFCSQECFKGSWATHKLLHKKAKDEK) adopts a C6H2-type zinc-finger fold. Positions 9, 14, 22, 25, 36, 40, 48, and 52 each coordinate Zn(2+). His-203 provides a ligand contact to a protein. Asp-220, Asp-231, and His-294 together coordinate Zn(2+). A protein is bound at residue His-301. The Zn(2+) site is built by Glu-327 and Glu-358.

The protein belongs to the peptidase M24A family. Methionine aminopeptidase type 1 subfamily. In terms of assembly, associates with the 60S ribosomal subunit of the 80S translational complex. Requires Zn(2+) as cofactor. The cofactor is Co(2+). It depends on Mn(2+) as a cofactor. Fe(2+) is required as a cofactor.

Its subcellular location is the cytoplasm. The enzyme catalyses Release of N-terminal amino acids, preferentially methionine, from peptides and arylamides.. Its function is as follows. Cotranslationally removes the N-terminal methionine from nascent proteins. The N-terminal methionine is often cleaved when the second residue in the primary sequence is small and uncharged (Met-Ala-, Cys, Gly, Pro, Ser, Thr, or Val). Required for normal progression through the cell cycle. This chain is Methionine aminopeptidase 1 (METAP1), found in Homo sapiens (Human).